A 362-amino-acid polypeptide reads, in one-letter code: Alpha-tubulin N-acetyltransferase (362 aa).

The region spanning 1-177 (MQFGCNVAEA…NNFLMLDASI (177 aa)) is the N-acetyltransferase domain. Acetyl-CoA contacts are provided by residues 111–124 (FYTHETVQRRGIGT) and 147–156 (SPKLLAFLSK).

It belongs to the acetyltransferase ATAT1 family.

The catalysed reaction is L-lysyl-[alpha-tubulin] + acetyl-CoA = N(6)-acetyl-L-lysyl-[alpha-tubulin] + CoA + H(+). In terms of biological role, specifically acetylates 'Lys-40' in alpha-tubulin on the lumenal side of microtubules. Promotes microtubule destabilization and accelerates microtubule dynamics; this activity may be independent of acetylation activity. Acetylates alpha-tubulin with a slow enzymatic rate, due to a catalytic site that is not optimized for acetyl transfer. Enters the microtubule through each end and diffuses quickly throughout the lumen of microtubules. Acetylates only long/old microtubules because of its slow acetylation rate since it does not have time to act on dynamically unstable microtubules before the enzyme is released. This is Alpha-tubulin N-acetyltransferase from Giardia intestinalis (strain ATCC 50803 / WB clone C6) (Giardia lamblia).